Reading from the N-terminus, the 430-residue chain is Glutamate-1-semialdehyde 2,1-aminomutase (430 aa).

Lysine 269 bears the N6-(pyridoxal phosphate)lysine mark.

The protein belongs to the class-III pyridoxal-phosphate-dependent aminotransferase family. HemL subfamily. As to quaternary structure, homodimer. The cofactor is pyridoxal 5'-phosphate.

The protein resides in the cytoplasm. It catalyses the reaction (S)-4-amino-5-oxopentanoate = 5-aminolevulinate. The protein operates within porphyrin-containing compound metabolism; protoporphyrin-IX biosynthesis; 5-aminolevulinate from L-glutamyl-tRNA(Glu): step 2/2. This is Glutamate-1-semialdehyde 2,1-aminomutase from Desulfitobacterium hafniense (strain DSM 10664 / DCB-2).